The primary structure comprises 479 residues: MDYHSPYFFGYVLGLVHLLGIIAALHAVFTVRTAQGAIAWAMSLFFIPYFTLIPYLVFGARSFNAYIKARRQANQEMHVAMANLNWRPWVEEALTARESQSYAALRAMPKLGRMPCLANNQVKLLIDGRATFDAIFAAIEQAREVVLVQFFIIHNDTIGKALQQLLLRKAADGVKVFVLYDRVGSHALPASYSQSLRDAGVQIHAFATRRGWFNRFQVNFRNHRKIVVVDGVTGFIGGHNVGDEYLGGNPHLSPWRDTHVQIGGPVLACLQESFAEDWYWATRQLPPLILPDAYPDNGVLCQALASGPADPQETCSLFFIEAIHSATRRVWITSPYFIPDEAVFAALRLAVLRGVDVRILIPARPDHRIVYAASSLFAFEAVRAGVRMFRYQPGFLHQKVVLVDDEVSAIGSANLDNRSFRLNFEITLLTVDRDFADQVETMLTTDFEQAREITPEDSSKTHRIQQLGMRIARLISPIL.

A run of 2 helical transmembrane segments spans residues 8–28 and 38–58; these read FFGYVLGLVHLLGIIAALHAV and IAWAMSLFFIPYFTLIPYLVF. PLD phosphodiesterase domains lie at 218 to 245 and 392 to 419; these read VNFRNHRKIVVVDGVTGFIGGHNVGDEY and QPGFLHQKVVLVDDEVSAIGSANLDNRS. Active-site residues include H223, K225, D230, H397, K399, and D404.

It belongs to the phospholipase D family. Cardiolipin synthase subfamily. ClsA sub-subfamily.

Its subcellular location is the cell inner membrane. It carries out the reaction 2 a 1,2-diacyl-sn-glycero-3-phospho-(1'-sn-glycerol) = a cardiolipin + glycerol. Catalyzes the reversible phosphatidyl group transfer from one phosphatidylglycerol molecule to another to form cardiolipin (CL) (diphosphatidylglycerol) and glycerol. This Pseudomonas putida (strain W619) protein is Cardiolipin synthase A.